Here is a 326-residue protein sequence, read N- to C-terminus: High-affinity zinc uptake system protein ZnuA (326 aa).

Residues 1–22 form the signal peptide; it reads MIRPSSLVLAAALGTAALPARA. His59 contacts Zn(2+). The segment covering 117 to 155 has biased composition (basic and acidic residues); that stretch reads GGEHEHEHEHEHEHEHEHEHDGHGHAEEQAHHDHDHSGT. The tract at residues 117–161 is disordered; the sequence is GGEHEHEHEHEHEHEHEHEHDGHGHAEEQAHHDHDHSGTDPHAWL. Positions 158, 222, and 295 each coordinate Zn(2+). A disulfide bridge links Cys267 with Cys322.

Belongs to the bacterial solute-binding protein 9 family. As to quaternary structure, monomer.

The protein localises to the periplasm. Part of the ATP-binding cassette (ABC) transport system ZnuABC involved in zinc import. Binds zinc with high affinity and specificity and delivers it to the membrane permease for translocation into the cytoplasm. The chain is High-affinity zinc uptake system protein ZnuA from Paracoccus denitrificans (strain Pd 1222).